Consider the following 180-residue polypeptide: ATP-dependent protease subunit HslV (180 aa).

T7 is a catalytic residue. Residues A165, C168, and T171 each coordinate Na(+).

It belongs to the peptidase T1B family. HslV subfamily. As to quaternary structure, a double ring-shaped homohexamer of HslV is capped on each side by a ring-shaped HslU homohexamer. The assembly of the HslU/HslV complex is dependent on binding of ATP.

The protein localises to the cytoplasm. The enzyme catalyses ATP-dependent cleavage of peptide bonds with broad specificity.. With respect to regulation, allosterically activated by HslU binding. Its function is as follows. Protease subunit of a proteasome-like degradation complex believed to be a general protein degrading machinery. This is ATP-dependent protease subunit HslV from Geobacillus kaustophilus (strain HTA426).